The chain runs to 320 residues: Ferrochelatase (320 aa).

Positions 194 and 275 each coordinate Fe cation.

This sequence belongs to the ferrochelatase family. In terms of assembly, monomer.

The protein resides in the cytoplasm. The catalysed reaction is heme b + 2 H(+) = protoporphyrin IX + Fe(2+). It functions in the pathway porphyrin-containing compound metabolism; protoheme biosynthesis; protoheme from protoporphyrin-IX: step 1/1. Functionally, catalyzes the ferrous insertion into protoporphyrin IX. The polypeptide is Ferrochelatase (Salmonella paratyphi A (strain ATCC 9150 / SARB42)).